Here is a 135-residue protein sequence, read N- to C-terminus: Galectin-1 (135 aa).

Position 2 is an N-acetylalanine (A2). The Galectin domain occupies 4–135 (GLVASNLNLK…DFKIKCVAFE (132 aa)). Residues K13, K19, and K29 each carry the N6-acetyllysine modification. Position 30 is a phosphoserine (S30). Residues 45–49 (HFNPR), H53, N62, and 69–72 (WGTE) contribute to the a beta-D-galactoside site. K108 is subject to N6-acetyllysine; alternate. K108 carries the N6-succinyllysine; alternate modification. Residue K128 is modified to N6-acetyllysine.

In terms of assembly, homodimer. Binds LGALS3BP. Interacts with CD2, CD3, CD4, CD6, CD7, CD43, ALCAM and CD45. Interacts with laminin (via poly-N-acetyllactosamine). Interacts with SUSD2. Interacts with cargo receptor TMED10; the interaction mediates the translocation from the cytoplasm into the ERGIC (endoplasmic reticulum-Golgi intermediate compartment) and thereby secretion. Interacts with CD69.

It is found in the secreted. It localises to the extracellular space. The protein localises to the extracellular matrix. Its subcellular location is the cytoplasm. Lectin that binds beta-galactoside and a wide array of complex carbohydrates. Plays a role in regulating apoptosis, cell proliferation and cell differentiation. Inhibits CD45 protein phosphatase activity and therefore the dephosphorylation of Lyn kinase. Strong inducer of T-cell apoptosis. Plays a negative role in Th17 cell differentiation via activation of the receptor CD69. This is Galectin-1 (Lgals1) from Rattus norvegicus (Rat).